The primary structure comprises 32 residues: Acetolactate synthase, catabolic (32 aa).

This sequence belongs to the TPP enzyme family. Homodimer.

The enzyme catalyses 2 pyruvate + H(+) = (2S)-2-acetolactate + CO2. The protein operates within polyol metabolism; (R,R)-butane-2,3-diol biosynthesis; (R,R)-butane-2,3-diol from pyruvate: step 1/3. The chain is Acetolactate synthase, catabolic (budB) from Klebsiella aerogenes (Enterobacter aerogenes).